Reading from the N-terminus, the 256-residue chain is Probable ribosomal RNA small subunit methyltransferase A (256 aa).

H8, L10, G34, E55, D83, and N98 together coordinate S-adenosyl-L-methionine.

The protein belongs to the class I-like SAM-binding methyltransferase superfamily. rRNA adenine N(6)-methyltransferase family. RsmA subfamily.

Its subcellular location is the cytoplasm. Its function is as follows. Specifically dimethylates two adjacent adenosines in the loop of a conserved hairpin near the 3'-end of 16S rRNA in the 30S particle. May play a critical role in biogenesis of 30S subunits. The chain is Probable ribosomal RNA small subunit methyltransferase A from Methanospirillum hungatei JF-1 (strain ATCC 27890 / DSM 864 / NBRC 100397 / JF-1).